A 346-amino-acid polypeptide reads, in one-letter code: Biotin synthase (346 aa).

Residues 1-12 show a composition bias toward polar residues; sequence MPDTATVSSESE. Positions 1–21 are disordered; that stretch reads MPDTATVSSESEFSGHAHVAA. Positions 64-292 constitute a Radical SAM core domain; the sequence is NKVQLCSLLS…QSMVRLSAGR (229 aa). Residues C79, C83, and C86 each coordinate [4Fe-4S] cluster. Residues C123, C155, C215, and R287 each coordinate [2Fe-2S] cluster.

This sequence belongs to the radical SAM superfamily. Biotin synthase family. Homodimer. It depends on [4Fe-4S] cluster as a cofactor. [2Fe-2S] cluster serves as cofactor.

It catalyses the reaction (4R,5S)-dethiobiotin + (sulfur carrier)-SH + 2 reduced [2Fe-2S]-[ferredoxin] + 2 S-adenosyl-L-methionine = (sulfur carrier)-H + biotin + 2 5'-deoxyadenosine + 2 L-methionine + 2 oxidized [2Fe-2S]-[ferredoxin]. The protein operates within cofactor biosynthesis; biotin biosynthesis; biotin from 7,8-diaminononanoate: step 2/2. Its function is as follows. Catalyzes the conversion of dethiobiotin (DTB) to biotin by the insertion of a sulfur atom into dethiobiotin via a radical-based mechanism. This is Biotin synthase from Myxococcus xanthus (strain DK1622).